The chain runs to 303 residues: Phytochrome-associated serine/threonine-protein phosphatase 1 (303 aa).

Zn(2+) is bound by residues aspartate 50, histidine 52, aspartate 78, and asparagine 110. The active-site Proton donor is the histidine 111. Zn(2+)-binding residues include histidine 160 and histidine 234.

The protein belongs to the PPP phosphatase family. PP-6 (PP-V) subfamily. Interacts with PHYA and PHYB, mostly when they are phosphorylated and in Pfr forms. Interacts with TAP46. Interacts with PIN1 and PIN2. Interacts with ABI5. Interacts with PIF3 and PIF4. Protein phosphatase 6 (PP6) holoenzyme is a heterotrimeric complex formed by the catalytic subunit FYPP, a SAPS domain-containing subunit (SAL) and a protein phosphatase 2A regulatory subunit A (PP2AA). Zn(2+) is required as a cofactor. Mostly expressed in flowers. Also detected to a lower extent in stems and leaves. Expressed in roots.

It is found in the cytoplasm. The enzyme catalyses O-phospho-L-seryl-[protein] + H2O = L-seryl-[protein] + phosphate. It carries out the reaction O-phospho-L-threonyl-[protein] + H2O = L-threonyl-[protein] + phosphate. Its function is as follows. Catalytic subunit of protein phosphatase 6 (PP6). Dephosphorylates phosphorylated phytochromes, with a preference toward Pfr forms. Plays a major role in the photoperiodic control of flowering time in long days by modulating phytochrome signals in flowering time control. Involved in the regulation of polar auxin transport in roots. Dephosphorylates directly the auxin efflux carriers PIN1 and PIN2, thus promoting their proper polar localization in root cell plasma membrane. Acts antagonistically with the protein kinase PID to regulate the reversible phosphorylation of PIN and polar targeting, subsequently impacting polar auxin transport and plant development. Involved in the regulation of abscisic acid (ABA) signaling during seed germination and postgermination seedling growth. Functions as a negative regulator of ABA signaling through direct dephosphorylation and destabilization of ABI5. Acts antagonistically with the protein kinase SRK2E/SNRK2.6 to regulate ABI5 phosphorylation and ABA responses. Involved in the regulation of phosphorylation status in hypocotyl phototropism. Involved in the negative regulation of photomorphogenesis by controlling the stability and transcriptional activity of PIF3 and PIF4 proteins in the dark, via the regulation of their phosphorylation status. The sequence is that of Phytochrome-associated serine/threonine-protein phosphatase 1 from Arabidopsis thaliana (Mouse-ear cress).